Reading from the N-terminus, the 196-residue chain is Cell division protein SepF (196 aa).

Residues 15 to 80 are disordered; it reads VEDDEEFNEP…PKRSASTFSK (66 aa). The segment covering 56-79 has biased composition (polar residues); that stretch reads RPAQSTPKPQAQTAAPKRSASTFS.

The protein belongs to the SepF family. As to quaternary structure, homodimer. Interacts with FtsZ.

Its subcellular location is the cytoplasm. Cell division protein that is part of the divisome complex and is recruited early to the Z-ring. Probably stimulates Z-ring formation, perhaps through the cross-linking of FtsZ protofilaments. Its function overlaps with FtsA. The polypeptide is Cell division protein SepF (Lactococcus lactis subsp. cremoris (strain SK11)).